Consider the following 254-residue polypeptide: MVQLRPRLSRIPAPAEAMVDEDQAASEEEEAEHGLLLAQPSSGAAAEPLDEEEDADDEAPEELTFASAQAEAREEELRVRASARRDKTLLKEKRKRREELFIEQKKRKLLPDAVLEQLTTASEADIKKSPENVKVNLKKKSEQHAKGRNSKKVKVQKVQSVGQIESYMAVRLKDEDLRDSRQEAAKHFIHSCLYGSDSKRTTVNKFLSLNNKRSPVKKAAAQFLTSTWGAQKQQNAKRFKKRWMAKKMKKKTYK.

The disordered stretch occupies residues 1–90 (MVQLRPRLSR…ASARRDKTLL (90 aa)). 2 stretches are compositionally biased toward acidic residues: residues 18–31 (MVDEDQAASEEEEA) and 48–61 (PLDEEEDADDEAPE). Residues 71 to 90 (EAREEELRVRASARRDKTLL) show a composition bias toward basic and acidic residues. Lysine 127 is covalently cross-linked (Glycyl lysine isopeptide (Lys-Gly) (interchain with G-Cter in SUMO2)). Serine 129 carries the post-translational modification Phosphoserine. Lysine 157 is covalently cross-linked (Glycyl lysine isopeptide (Lys-Gly) (interchain with G-Cter in SUMO2)). A disordered region spans residues 235-254 (NAKRFKKRWMAKKMKKKTYK).

Belongs to the UTP16 family. Part of the small subunit (SSU) processome, composed of more than 70 proteins and the RNA chaperone small nucleolar RNA (snoRNA) U3.

Its subcellular location is the nucleus. It is found in the nucleolus. Its function is as follows. Functions as part of the small subunit (SSU) processome, first precursor of the small eukaryotic ribosomal subunit that coordinates the first two steps of ribosome biogenesis in transcription of the primary transcript pre-RNA and pre-18S processing. During the assembly of the SSU processome in the nucleolus, many ribosome biogenesis factors, an RNA chaperone and ribosomal proteins associate with the nascent pre-rRNA and work in concert to generate RNA folding, modifications, rearrangements and cleavage as well as targeted degradation of pre-ribosomal RNA by the RNA exosome. This subunit is required for processing of the 5'-external transcribed spacer sequence (5'ETS) of the primary transcript pre-rRNA to yield the 18S rRNA. Also plays a role in maintaining early pre-rRNA levels, either by assisting in its transcription or stability. The chain is U3 small nucleolar RNA-associated protein NOL7 (Nol7) from Mus musculus (Mouse).